The chain runs to 281 residues: Microtubule-associated protein RP/EB family member 3 (281 aa).

The Calponin-homology (CH) domain occupies 14–116; it reads NLSRHDMLAW…FIQWFKKFFD (103 aa). Disordered stretches follow at residues 157-181 and 260-281; these read VPQR…VAPP and EGFA…QDEY. Residues 158-175 are compositionally biased toward polar residues; it reads PQRTSPTGPKNMQTSGRL. Phosphoserine is present on residues Ser-162 and Ser-176. The 71-residue stretch at 194–264 folds into the EB1 C-terminal domain; that stretch reads GGHEADAQIL…LYATEEGFAP (71 aa). An APC-binding region spans residues 217-260; the sequence is DGLEKERDFYFSKLRDIELICQEHESENSPVISGIIGILYATEE. The DCTN1-binding stretch occupies residues 217–281; that stretch reads DGLEKERDFY…EHQQEDQDEY (65 aa). Basic and acidic residues predominate over residues 272 to 281; that stretch reads EHQQEDQDEY.

This sequence belongs to the MAPRE family. As to quaternary structure, homodimer. Heterodimer with MAPRE1. Binds monomeric and polymerized GTP-bound tubulin. Interacts with DCTN1 and SRCIN1. Binds to the C-terminal domain of APC. Interacts (via C-terminus) with CLIP1. Interacts with SLAIN2. Interacts with SLAIN1. Interacts with APC2. Interacts with AKAP9. Interacts with PDE4DIP isoform 2/MMG8/SMYLE; this interaction is required for its recruitment to the Golgi apparatus.

It localises to the cytoplasm. It is found in the cytoskeleton. Plus-end tracking protein (+TIP) that binds to the plus-end of microtubules and regulates the dynamics of the microtubule cytoskeleton. Promotes microtubule growth. May be involved in spindle function by stabilizing microtubules and anchoring them at centrosomes. Also acts as a regulator of minus-end microtubule organization: interacts with the complex formed by AKAP9 and PDE4DIP, leading to recruit CAMSAP2 to the Golgi apparatus, thereby tethering non-centrosomal minus-end microtubules to the Golgi, an important step for polarized cell movement. Promotes elongation of CAMSAP2-decorated microtubule stretches on the minus-end of microtubules. The polypeptide is Microtubule-associated protein RP/EB family member 3 (Mapre3) (Mus musculus (Mouse)).